Here is a 505-residue protein sequence, read N- to C-terminus: Amidophosphoribosyltransferase (505 aa).

Cys2 acts as the Nucleophile in catalysis. Residues 2 to 235 (CGIVGIVSQS…AGEAVYVTFD (234 aa)) form the Glutamine amidotransferase type-2 domain. Residues Thr306, Asp368, and Asp369 each contribute to the Mg(2+) site. A disordered region spans residues 484-505 (RNDNAKKKREKQASNLEIYNEQ). Positions 496-505 (ASNLEIYNEQ) are enriched in polar residues.

The protein in the C-terminal section; belongs to the purine/pyrimidine phosphoribosyltransferase family. The cofactor is Mg(2+).

The enzyme catalyses 5-phospho-beta-D-ribosylamine + L-glutamate + diphosphate = 5-phospho-alpha-D-ribose 1-diphosphate + L-glutamine + H2O. The protein operates within purine metabolism; IMP biosynthesis via de novo pathway; N(1)-(5-phospho-D-ribosyl)glycinamide from 5-phospho-alpha-D-ribose 1-diphosphate: step 1/2. Catalyzes the formation of phosphoribosylamine from phosphoribosylpyrophosphate (PRPP) and glutamine. This is Amidophosphoribosyltransferase from Haemophilus influenzae (strain ATCC 51907 / DSM 11121 / KW20 / Rd).